We begin with the raw amino-acid sequence, 267 residues long: MTIPAFGLGTFRLKDDVVIASVKTALELGYRAVDTAQIYDNEAAVGQAIAESGVPRNELYITTKIWIENLSKDKLIPSLKESLKKLRTDYVDLTLIHWPSPGDAVSVEEFMQALLEAKKQGLTREIGISNFTIPLMEKAIAAVGADHIATNQIELSPYLQNRKVVDWAKAHGIHITSYMTLAYGKALKDEVIARIAVKHNATPVQVILAWAMGEGYSVIPSSTRRENLASNLLAQDLHLDAEDKNAIAALDCNDRLVSPEGLAPAWD.

Tyr39 functions as the Proton donor in the catalytic mechanism. Substrate is bound at residue His97. Residue 179–231 (MTLAYGKALKDEVIARIAVKHNATPVQVILAWAMGEGYSVIPSSTRRENLASN) participates in NADP(+) binding.

Belongs to the aldo/keto reductase family. In terms of assembly, monomer.

The protein resides in the cytoplasm. The enzyme catalyses hydroxyacetone + NADP(+) = methylglyoxal + NADPH + H(+). Aldo-keto reductase that significantly contributes to cellular methylglyoxal detoxification by catalyzing the NADPH-dependent conversion of methylglyoxal to acetol. The chain is Methylglyoxal reductase DkgB from Salmonella typhi.